The chain runs to 192 residues: Shikimate kinase (192 aa).

Residue 15–20 coordinates ATP; it reads GAGKTT. Thr19 serves as a coordination point for Mg(2+). Positions 37, 61, and 83 each coordinate substrate. Residue Arg121 coordinates ATP. Residue Arg140 participates in substrate binding.

This sequence belongs to the shikimate kinase family. In terms of assembly, monomer. It depends on Mg(2+) as a cofactor.

It localises to the cytoplasm. The catalysed reaction is shikimate + ATP = 3-phosphoshikimate + ADP + H(+). It functions in the pathway metabolic intermediate biosynthesis; chorismate biosynthesis; chorismate from D-erythrose 4-phosphate and phosphoenolpyruvate: step 5/7. In terms of biological role, catalyzes the specific phosphorylation of the 3-hydroxyl group of shikimic acid using ATP as a cosubstrate. The protein is Shikimate kinase of Cupriavidus pinatubonensis (strain JMP 134 / LMG 1197) (Cupriavidus necator (strain JMP 134)).